We begin with the raw amino-acid sequence, 463 residues long: Nitrate/nitrite antiporter NarK (463 aa).

At 1 to 37 (MSHSSAPERATGAVITDWRPEDPAFWQQRGQRIASRN) the chain is on the cytoplasmic side. Residues 38–59 (LWISVPCLLLAFCVWMLFSAVA) form a helical membrane-spanning segment. At 60–73 (VNLPKVGFNFTTDQ) the chain is on the periplasmic side. The helical transmembrane segment at 74–95 (LFMLTALPSVSGALLRVPYSFM) threads the bilayer. Residue Arg-89 participates in nitrate binding. Residue Arg-89 coordinates nitrite. Over 96-102 (VPIFGGR) the chain is Cytoplasmic. The chain crosses the membrane as a helical span at residues 103–122 (RWTAFSTGILIIPCVWLGFA). The Periplasmic portion of the chain corresponds to 123-130 (VQDTSTPY). The chain crosses the membrane as a helical span at residues 131-151 (SVFIIISLLCGFAGANFASSM). Residues 152–166 (ANISFFFPKQKQGGA) lie on the Cytoplasmic side of the membrane. The helical transmembrane segment at 167–189 (LGLNGGLGNMGVSVMQLVAPLVV) threads the bilayer. Asn-175 is a nitrate binding site. Residues 190–211 (SLSIFAVFGSQGVKQPDGTELY) are Periplasmic-facing. The helical transmembrane segment at 212 to 233 (LANASWIWVPFLAIFTIAAWFG) threads the bilayer. Over 234–253 (MNDLATSKASIKEQLPVLKR) the chain is Cytoplasmic. A helical transmembrane segment spans residues 254–281 (GHLWIMSLLYLATFGSFIGFSAGFAMLS). Residue Tyr-263 participates in nitrate binding. Tyr-263 is a binding site for nitrite. Residues 282–289 (KTQFPDVQ) lie on the Periplasmic side of the membrane. The chain crosses the membrane as a helical span at residues 290–312 (ILQYAFFGPFIGALARSAGGALS). Over 313–316 (DRLG) the chain is Cytoplasmic. The chain crosses the membrane as a helical span at residues 317–338 (GTRVTLVNFILMAIFSGLLFLT). The Periplasmic portion of the chain corresponds to 339 to 347 (LPTDGQGGS). Residues 348–373 (FMAFFAVFLALFLTAGLGSGSTFQMI) traverse the membrane as a helical segment. The Cytoplasmic portion of the chain corresponds to 374-405 (SVIFRKLTMDRVKAEGGSDERAMREAATDTAA). The helical transmembrane segment at 406–427 (ALGFISAIGAIGGFFIPKAFGS) threads the bilayer. Ser-411 provides a ligand contact to nitrate. The Periplasmic portion of the chain corresponds to 428-435 (SLALTGSP). Residues 436 to 458 (VGAMKVFLIFYIACVVITWAVYG) form a helical membrane-spanning segment. The Cytoplasmic portion of the chain corresponds to 459–463 (RHSKK).

This sequence belongs to the major facilitator superfamily. Nitrate/nitrite porter (TC 2.A.1.8) family.

Its subcellular location is the cell inner membrane. The catalysed reaction is nitrate(in) + nitrite(out) = nitrate(out) + nitrite(in). Catalyzes nitrate uptake, nitrite uptake and nitrite export across the cytoplasmic membrane. Functions as a nitrate/nitrite exchanger, and protons are unlikely to be co-transported. The chain is Nitrate/nitrite antiporter NarK from Escherichia coli (strain K12).